Consider the following 562-residue polypeptide: Sulfite reductase [NADPH] hemoprotein beta-component (562 aa).

Positions 426, 432, 471, and 475 each coordinate [4Fe-4S] cluster. C475 lines the siroheme pocket.

This sequence belongs to the nitrite and sulfite reductase 4Fe-4S domain family. As to quaternary structure, alpha(8)-beta(8). The alpha component is a flavoprotein, the beta component is a hemoprotein. Siroheme is required as a cofactor. Requires [4Fe-4S] cluster as cofactor.

The catalysed reaction is hydrogen sulfide + 3 NADP(+) + 3 H2O = sulfite + 3 NADPH + 4 H(+). The protein operates within sulfur metabolism; hydrogen sulfide biosynthesis; hydrogen sulfide from sulfite (NADPH route): step 1/1. Component of the sulfite reductase complex that catalyzes the 6-electron reduction of sulfite to sulfide. This is one of several activities required for the biosynthesis of L-cysteine from sulfate. The protein is Sulfite reductase [NADPH] hemoprotein beta-component of Shewanella denitrificans (strain OS217 / ATCC BAA-1090 / DSM 15013).